The primary structure comprises 513 residues: 2,3-bisphosphoglycerate-independent phosphoglycerate mutase (513 aa).

Mn(2+) contacts are provided by D13 and S63. The Phosphoserine intermediate role is filled by S63. Substrate-binding positions include H124, 154 to 155, R186, R192, 262 to 265, and K335; these read RD and RADR. 5 residues coordinate Mn(2+): D403, H407, D444, H445, and H463.

Belongs to the BPG-independent phosphoglycerate mutase family. As to quaternary structure, monomer. Mn(2+) serves as cofactor.

It carries out the reaction (2R)-2-phosphoglycerate = (2R)-3-phosphoglycerate. It functions in the pathway carbohydrate degradation; glycolysis; pyruvate from D-glyceraldehyde 3-phosphate: step 3/5. Catalyzes the interconversion of 2-phosphoglycerate and 3-phosphoglycerate. The polypeptide is 2,3-bisphosphoglycerate-independent phosphoglycerate mutase (Myxococcus xanthus (strain DK1622)).